The sequence spans 373 residues: MSDNSKTRVVVGMSGGVDSSVTALLLKEQGYDVIGIFMKNWDDTDENGVCTATEDYKDVVAVADQIGIPYYSVNFEKEYWDRVFEYFLAEYRAGRTPNPDVMCNKEIKFKAFLDYAMTLGADYVATGHYARVVRDEDGTVHMLRGVDNGKDQTYFLSQLSQEQLQKTMFPLGHLEKPEVRKLAEEAGLSTAKKKDSTGICFIGEKNFKNFLSNYLPAQPGRMMTVDGRDMGEHAGLMYYTIGQRGGLGIGGQHGGDNAPWFVVGKDLSKNILYVGQGFYHDSLMSTSLEASQVHFTREMPEEFTLECTAKFRYRQPDSKVTVHVKGDKAEVIFTEPQRAITPGQAVVFYDGEECLGGGLIDNAYRDGQVCQYI.

ATP-binding positions include 12–19 (GMSGGVDS) and M38. The interval 98 to 100 (NPD) is interaction with target base in tRNA. C103 (nucleophile) is an active-site residue. C103 and C200 are joined by a disulfide. G127 is an ATP binding site. Positions 150–152 (KDQ) are interaction with tRNA. The active-site Cysteine persulfide intermediate is C200. The tract at residues 312 to 313 (RY) is interaction with tRNA.

This sequence belongs to the MnmA/TRMU family.

It localises to the cytoplasm. The enzyme catalyses S-sulfanyl-L-cysteinyl-[protein] + uridine(34) in tRNA + AH2 + ATP = 2-thiouridine(34) in tRNA + L-cysteinyl-[protein] + A + AMP + diphosphate + H(+). Catalyzes the 2-thiolation of uridine at the wobble position (U34) of tRNA, leading to the formation of s(2)U34. This chain is tRNA-specific 2-thiouridylase MnmA, found in Streptococcus pneumoniae (strain CGSP14).